Consider the following 238-residue polypeptide: Purine nucleoside phosphorylase DeoD-type (238 aa).

His-4 contributes to the a purine D-ribonucleoside binding site. Residues Gly-20, Arg-24, Arg-43, and 87–90 (RVGS) each bind phosphate. Residues 179–181 (EME) and 203–204 (SD) each bind a purine D-ribonucleoside. Asp-204 acts as the Proton donor in catalysis.

The protein belongs to the PNP/UDP phosphorylase family. As to quaternary structure, homohexamer; trimer of homodimers.

It carries out the reaction a purine D-ribonucleoside + phosphate = a purine nucleobase + alpha-D-ribose 1-phosphate. The enzyme catalyses a purine 2'-deoxy-D-ribonucleoside + phosphate = a purine nucleobase + 2-deoxy-alpha-D-ribose 1-phosphate. Its function is as follows. Catalyzes the reversible phosphorolytic breakdown of the N-glycosidic bond in the beta-(deoxy)ribonucleoside molecules, with the formation of the corresponding free purine bases and pentose-1-phosphate. This Haemophilus influenzae (strain PittEE) protein is Purine nucleoside phosphorylase DeoD-type.